A 450-amino-acid polypeptide reads, in one-letter code: tRNA modification GTPase MnmE (450 aa).

(6S)-5-formyl-5,6,7,8-tetrahydrofolate is bound by residues Arg23, Glu79, and Lys118. In terms of domain architecture, TrmE-type G spans 214 to 374 (GITLILVGKP…LKEHILNKVG (161 aa)). Asn224 contacts K(+). GTP contacts are provided by residues 224–229 (NAGKSS), 243–249 (TSIAGTT), and 268–271 (DTAG). Ser228 serves as a coordination point for Mg(2+). Thr243, Ile245, and Thr248 together coordinate K(+). Thr249 lines the Mg(2+) pocket. Lys450 provides a ligand contact to (6S)-5-formyl-5,6,7,8-tetrahydrofolate.

It belongs to the TRAFAC class TrmE-Era-EngA-EngB-Septin-like GTPase superfamily. TrmE GTPase family. In terms of assembly, homodimer. Heterotetramer of two MnmE and two MnmG subunits. It depends on K(+) as a cofactor.

It is found in the cytoplasm. Its function is as follows. Exhibits a very high intrinsic GTPase hydrolysis rate. Involved in the addition of a carboxymethylaminomethyl (cmnm) group at the wobble position (U34) of certain tRNAs, forming tRNA-cmnm(5)s(2)U34. This is tRNA modification GTPase MnmE from Francisella tularensis subsp. tularensis (strain FSC 198).